Consider the following 2148-residue polypeptide: Polyketide synthase 1 (2148 aa).

An N-terminal acylcarrier protein transacylase domain (SAT) region spans residues 19-261 (FIFGDQSSCN…TPLAVHAPYH (243 aa)). One can recognise a Ketosynthase family 3 (KS3) domain in the interval 394-829 (ESKIAIIGMS…GGNTALLVED (436 aa)). Active-site for beta-ketoacyl synthase activity residues include Cys566, His701, and His745. Residues 929-1233 (AFVFSGQGSQ…PSLMRNKDGW (305 aa)) are malonyl-CoA:ACP transacylase (MAT) domain. Ser1018 functions as the For acyl/malonyl transferase activity in the catalytic mechanism. A product template (PT) domain region spans residues 1310 to 1624 (TASVHRIVHE…RKVLNTAMPP (315 aa)). The N-terminal hotdog fold stretch occupies residues 1314 to 1447 (HRIVHESVEK…SSLHFEQPKV (134 aa)). In terms of domain architecture, PKS/mFAS DH spans 1314–1619 (HRIVHESVEK…FQGIPRKVLN (306 aa)). Residue His1346 is the Proton acceptor; for dehydratase activity of the active site. The segment at 1474 to 1619 (LNSRMSSGVI…FQGIPRKVLN (146 aa)) is C-terminal hotdog fold. The active-site Proton donor; for dehydratase activity is Asp1533. Residues 1619–1655 (NTAMPPPKSQNEAPVRSGPAKPAAKPPRSASSEHSGH) form a disordered region. The segment covering 1634–1650 (RSGPAKPAAKPPRSASS) has biased composition (low complexity). Residues 1678–1752 (RNPMLPVFKI…DLAAHLGLDT (75 aa)) form the Carrier 1 domain. An O-(pantetheine 4'-phosphoryl)serine modification is found at Ser1712. Composition is skewed to low complexity over residues 1757–1769 (QSSG…GGLS) and 1779–1796 (TSSV…SVSG). The disordered stretch occupies residues 1757 to 1796 (QSSGQSSSFGGLSPRSDSIGEITSSVTTPPSLSPRSSVSG). In terms of domain architecture, Carrier 2 spans 1793–1870 (SVSGSQCKDV…SFKHMFQQGH (78 aa)). Ser1830 bears the O-(pantetheine 4'-phosphoryl)serine mark. The thioesterase (TE) domain stretch occupies residues 1882–2146 (LKQYRATSTL…ERVAAFIRST (265 aa)). Ser1973 functions as the For thioesterase activity in the catalytic mechanism.

Its function is as follows. Polyketide synthase; part of the Pks1 gene cluster that mediates the biosynthesis of an anthraquinone derivative pigment that contributes to conidial pigmentation that provides protection from UV radiation, heat and cold stress. The polyketide synthase Pks1 produces 1-acetyl-2,4,6,8-tetrahydroxy-9,10-anthraquinone though condensation of acetyl-CoA with malonyl-CoA. The dehydratase EthD and the laccase Mlac1 further convert the anthraquinone derivative into the final conidial pigment. The sequence is that of Polyketide synthase 1 from Metarhizium anisopliae (strain ARSEF 549).